We begin with the raw amino-acid sequence, 188 residues long: dCTP deaminase (188 aa).

DCTP is bound by residues 111–116 (KSTYAR), 135–137 (TLE), glutamine 156, tyrosine 170, and glutamine 180. Glutamate 137 functions as the Proton donor/acceptor in the catalytic mechanism.

This sequence belongs to the dCTP deaminase family. Homotrimer.

The enzyme catalyses dCTP + H2O + H(+) = dUTP + NH4(+). Its pathway is pyrimidine metabolism; dUMP biosynthesis; dUMP from dCTP (dUTP route): step 1/2. Its function is as follows. Catalyzes the deamination of dCTP to dUTP. The sequence is that of dCTP deaminase from Paracidovorax citrulli (strain AAC00-1) (Acidovorax citrulli).